Reading from the N-terminus, the 232-residue chain is Orotate phosphoribosyltransferase (232 aa).

Residues Arg107, Lys108, Lys111, His113, and 133 to 141 each bind 5-phospho-alpha-D-ribose 1-diphosphate; that span reads EDLTTAGGS. An orotate-binding site is contributed by Thr137.

The protein belongs to the purine/pyrimidine phosphoribosyltransferase family. PyrE subfamily. Homodimer. Requires Mg(2+) as cofactor.

It catalyses the reaction orotidine 5'-phosphate + diphosphate = orotate + 5-phospho-alpha-D-ribose 1-diphosphate. It participates in pyrimidine metabolism; UMP biosynthesis via de novo pathway; UMP from orotate: step 1/2. Functionally, catalyzes the transfer of a ribosyl phosphate group from 5-phosphoribose 1-diphosphate to orotate, leading to the formation of orotidine monophosphate (OMP). The chain is Orotate phosphoribosyltransferase from Rhizobium meliloti (strain 1021) (Ensifer meliloti).